The following is a 360-amino-acid chain: Mitogen-activated protein kinase 14 (360 aa).

At Ser-2 the chain carries N-acetylserine. At Ser-2 the chain carries Phosphoserine. Position 16 is a phosphothreonine (Thr-16). Residues 24–308 (YQNLSPVGSG…AAQALAHAYF (285 aa)) form the Protein kinase domain. ATP contacts are provided by residues 30–38 (VGSGAYGSV) and Lys-53. 2 positions are modified to N6-acetyllysine: Lys-53 and Lys-152. Asp-168 functions as the Proton acceptor in the catalytic mechanism. Phosphothreonine; by MAP2K3, MAP2K4, MAP2K6 and autocatalysis is present on Thr-180. The short motif at 180–182 (TGY) is the TXY element. Residue Tyr-182 is modified to Phosphotyrosine; by MAP2K3, MAP2K4, MAP2K6 and autocatalysis. Thr-263 is subject to Phosphothreonine. Tyr-323 carries the phosphotyrosine; by ZAP70 modification.

The protein belongs to the protein kinase superfamily. CMGC Ser/Thr protein kinase family. MAP kinase subfamily. In terms of assembly, component of a signaling complex containing at least AKAP13, PKN1, MAPK14, ZAK and MAP2K3. Within this complex, AKAP13 interacts directly with PKN1, which in turn recruits MAPK14, MAP2K3 and ZAK. Binds to a kinase interaction motif within the protein tyrosine phosphatase, PTPRR. This interaction retains MAPK14 in the cytoplasm and prevents nuclear accumulation. Interacts with SPAG9 and GADD45A. Interacts with CDC25B, CDC25C, DUSP1, DUSP10, DUSP16, NP60, SUPT20H and TAB1. Interacts with casein kinase II subunits CSNK2A1 and CSNK2B. Interacts with PPM1D. Interacts with CDK5RAP3; recruits PPM1D to MAPK14 and may regulate its dephosphorylation. Interacts with DUSP2; this interaction does not lead to catalytic activation of DUSP2 and dephosphrylation of MAPK14. It depends on Mg(2+) as a cofactor. Post-translationally, dually phosphorylated on Thr-180 and Tyr-182 by the MAP2Ks MAP2K3/MKK3, MAP2K4/MKK4 and MAP2K6/MKK6 in response to inflammatory citokines, environmental stress or growth factors, which activates the enzyme. Dual phosphorylation can also be mediated by TAB1-mediated autophosphorylation. TCR engagement in T-cells also leads to Tyr-323 phosphorylation by ZAP70. Dephosphorylated and inactivated by DUPS1, DUSP10 and DUSP16. PPM1D also mediates dephosphorylation and inactivation of MAPK14. In terms of processing, acetylated at Lys-53 and Lys-152 by KAT2B and EP300. Acetylation at Lys-53 increases the affinity for ATP and enhances kinase activity. Lys-53 and Lys-152 are deacetylated by HDAC3. Ubiquitinated. Ubiquitination leads to degradation by the proteasome pathway. In terms of tissue distribution, brain, heart, placenta, pancreas and skeletal muscle. Expressed to a lesser extent in lung, liver and kidney.

The protein resides in the cytoplasm. It is found in the nucleus. The enzyme catalyses L-seryl-[protein] + ATP = O-phospho-L-seryl-[protein] + ADP + H(+). It catalyses the reaction L-threonyl-[protein] + ATP = O-phospho-L-threonyl-[protein] + ADP + H(+). Its activity is regulated as follows. Activated by cell stresses such as DNA damage, heat shock, osmotic shock, anisomycin and sodium arsenite, as well as pro-inflammatory stimuli such as bacterial lipopolysaccharide (LPS) and interleukin-1. Activation occurs through dual phosphorylation of Thr-180 and Tyr-182 by either of two dual specificity kinases, MAP2K3/MKK3 or MAP2K6/MKK6, and potentially also MAP2K4/MKK4, as well as by TAB1-mediated autophosphorylation. MAPK14 phosphorylated on both Thr-180 and Tyr-182 is 10-20-fold more active than MAPK14 phosphorylated only on Thr-180, whereas MAPK14 phosphorylated on Tyr-182 alone is inactive. whereas Thr-180 is necessary for catalysis, Tyr-182 may be required for auto-activation and substrate recognition. Phosphorylated at Tyr-323 by ZAP70 in an alternative activation pathway in response to TCR signaling in T-cells. This alternative pathway is inhibited by GADD45A. Inhibited by dual specificity phosphatases, such as DUSP1, DUSP10, and DUSP16. Specifically inhibited by the binding of pyridinyl-imidazole compounds, which are cytokine-suppressive anti-inflammatory drugs (CSAID). Isoform Mxi2 is 100-fold less sensitive to these agents than the other isoforms and is not inhibited by DUSP1. Isoform Exip is not activated by MAP2K6. SB203580 is an inhibitor of MAPK14. Its function is as follows. Serine/threonine kinase which acts as an essential component of the MAP kinase signal transduction pathway. MAPK14 is one of the four p38 MAPKs which play an important role in the cascades of cellular responses evoked by extracellular stimuli such as pro-inflammatory cytokines or physical stress leading to direct activation of transcription factors. Accordingly, p38 MAPKs phosphorylate a broad range of proteins and it has been estimated that they may have approximately 200 to 300 substrates each. Some of the targets are downstream kinases which are activated through phosphorylation and further phosphorylate additional targets. RPS6KA5/MSK1 and RPS6KA4/MSK2 can directly phosphorylate and activate transcription factors such as CREB1, ATF1, the NF-kappa-B isoform RELA/NFKB3, STAT1 and STAT3, but can also phosphorylate histone H3 and the nucleosomal protein HMGN1. RPS6KA5/MSK1 and RPS6KA4/MSK2 play important roles in the rapid induction of immediate-early genes in response to stress or mitogenic stimuli, either by inducing chromatin remodeling or by recruiting the transcription machinery. On the other hand, two other kinase targets, MAPKAPK2/MK2 and MAPKAPK3/MK3, participate in the control of gene expression mostly at the post-transcriptional level, by phosphorylating ZFP36 (tristetraprolin) and ELAVL1, and by regulating EEF2K, which is important for the elongation of mRNA during translation. MKNK1/MNK1 and MKNK2/MNK2, two other kinases activated by p38 MAPKs, regulate protein synthesis by phosphorylating the initiation factor EIF4E2. MAPK14 also interacts with casein kinase II, leading to its activation through autophosphorylation and further phosphorylation of TP53/p53. In the cytoplasm, the p38 MAPK pathway is an important regulator of protein turnover. For example, CFLAR is an inhibitor of TNF-induced apoptosis whose proteasome-mediated degradation is regulated by p38 MAPK phosphorylation. In a similar way, MAPK14 phosphorylates the ubiquitin ligase SIAH2, regulating its activity towards EGLN3. MAPK14 may also inhibit the lysosomal degradation pathway of autophagy by interfering with the intracellular trafficking of the transmembrane protein ATG9. Another function of MAPK14 is to regulate the endocytosis of membrane receptors by different mechanisms that impinge on the small GTPase RAB5A. In addition, clathrin-mediated EGFR internalization induced by inflammatory cytokines and UV irradiation depends on MAPK14-mediated phosphorylation of EGFR itself as well as of RAB5A effectors. Ectodomain shedding of transmembrane proteins is regulated by p38 MAPKs as well. In response to inflammatory stimuli, p38 MAPKs phosphorylate the membrane-associated metalloprotease ADAM17. Such phosphorylation is required for ADAM17-mediated ectodomain shedding of TGF-alpha family ligands, which results in the activation of EGFR signaling and cell proliferation. Another p38 MAPK substrate is FGFR1. FGFR1 can be translocated from the extracellular space into the cytosol and nucleus of target cells, and regulates processes such as rRNA synthesis and cell growth. FGFR1 translocation requires p38 MAPK activation. In the nucleus, many transcription factors are phosphorylated and activated by p38 MAPKs in response to different stimuli. Classical examples include ATF1, ATF2, ATF6, ELK1, PTPRH, DDIT3, TP53/p53 and MEF2C and MEF2A. The p38 MAPKs are emerging as important modulators of gene expression by regulating chromatin modifiers and remodelers. The promoters of several genes involved in the inflammatory response, such as IL6, IL8 and IL12B, display a p38 MAPK-dependent enrichment of histone H3 phosphorylation on 'Ser-10' (H3S10ph) in LPS-stimulated myeloid cells. This phosphorylation enhances the accessibility of the cryptic NF-kappa-B-binding sites marking promoters for increased NF-kappa-B recruitment. Phosphorylates CDC25B and CDC25C which is required for binding to 14-3-3 proteins and leads to initiation of a G2 delay after ultraviolet radiation. Phosphorylates TIAR following DNA damage, releasing TIAR from GADD45A mRNA and preventing mRNA degradation. The p38 MAPKs may also have kinase-independent roles, which are thought to be due to the binding to targets in the absence of phosphorylation. Protein O-Glc-N-acylation catalyzed by the OGT is regulated by MAPK14, and, although OGT does not seem to be phosphorylated by MAPK14, their interaction increases upon MAPK14 activation induced by glucose deprivation. This interaction may regulate OGT activity by recruiting it to specific targets such as neurofilament H, stimulating its O-Glc-N-acylation. Required in mid-fetal development for the growth of embryo-derived blood vessels in the labyrinth layer of the placenta. Also plays an essential role in developmental and stress-induced erythropoiesis, through regulation of EPO gene expression. Isoform MXI2 activation is stimulated by mitogens and oxidative stress and only poorly phosphorylates ELK1 and ATF2. Isoform EXIP may play a role in the early onset of apoptosis. Phosphorylates S100A9 at 'Thr-113'. Phosphorylates NLRP1 downstream of MAP3K20/ZAK in response to UV-B irradiation and ribosome collisions, promoting activation of the NLRP1 inflammasome and pyroptosis. (Microbial infection) Activated by phosphorylation by M.tuberculosis EsxA in T-cells leading to inhibition of IFN-gamma production; phosphorylation is apparent within 15 minutes and is inhibited by kinase-specific inhibitors SB203580 and siRNA. The polypeptide is Mitogen-activated protein kinase 14 (Homo sapiens (Human)).